The sequence spans 394 residues: Serine palmitoyltransferase (394 aa).

Pyridoxal 5'-phosphate contacts are provided by residues 111 to 112 (GF), serine 183, histidine 211, and threonine 239. Residue lysine 242 is modified to N6-(pyridoxal phosphate)lysine.

Belongs to the class-II pyridoxal-phosphate-dependent aminotransferase family. The cofactor is pyridoxal 5'-phosphate.

The catalysed reaction is L-serine + hexadecanoyl-CoA + H(+) = 3-oxosphinganine + CO2 + CoA. The protein operates within lipid metabolism; sphingolipid metabolism. Involved in de novo bacterial ceramide synthesis. Catalyzes the condensation of L-serine with palmitoyl-CoA (hexadecanoyl-CoA) to produce 3-oxosphinganine. Also capable of using alanine as substrate leading to the formation of 1-deoxysphinganine (1-deoxySa). Contributes to the levels of endogenous sphingolipids in its host. This chain is Serine palmitoyltransferase, found in Bacteroides ovatus (strain ATCC 8483 / DSM 1896 / JCM 5824 / BCRC 10623 / CCUG 4943 / NCTC 11153).